A 179-amino-acid chain; its full sequence is Lipoprotein signal peptidase (179 aa).

4 consecutive transmembrane segments (helical) span residues Leu10–Ile30, Val48–Phe68, Trp75–Leu95, and Asn101–Ile121. Residues Asp131 and Asp149 contribute to the active site. The chain crosses the membrane as a helical span at residues His141–Ile161.

This sequence belongs to the peptidase A8 family.

Its subcellular location is the cell inner membrane. The enzyme catalyses Release of signal peptides from bacterial membrane prolipoproteins. Hydrolyzes -Xaa-Yaa-Zaa-|-(S,diacylglyceryl)Cys-, in which Xaa is hydrophobic (preferably Leu), and Yaa (Ala or Ser) and Zaa (Gly or Ala) have small, neutral side chains.. The protein operates within protein modification; lipoprotein biosynthesis (signal peptide cleavage). Functionally, this protein specifically catalyzes the removal of signal peptides from prolipoproteins. The chain is Lipoprotein signal peptidase from Acinetobacter baylyi (strain ATCC 33305 / BD413 / ADP1).